Reading from the N-terminus, the 349-residue chain is Protein disulfide isomerase Creld2 (349 aa).

An N-terminal signal peptide occupies residues 1-22 (MHLLLAAGFGLLLLLLPPPAAS). Residues 28–31 (CQRC) carry the CXXC motif. Intrachain disulfides connect cysteine 28–cysteine 31, cysteine 137–cysteine 151, cysteine 145–cysteine 163, and cysteine 165–cysteine 174. Residues 133–175 (DCKECQGGSERPCSGNGYCSGDGSRQGDGSCQCHAGYKGPLCI) enclose the EGF-like 1 domain. Asparagine 187 is a glycosylation site (N-linked (GlcNAc...) asparagine). The FU 1 repeat unit spans residues 190 to 237 (HSICLACDESCKTCSGPSNKDCVQCEVGWARVEDACVDVDECAAETPP). The N-linked (GlcNAc...) asparagine glycan is linked to asparagine 248. The FU 2 repeat unit spans residues 250-297 (SYICEECDSTCVGCTGKGPANCKECIAGYTKQSGQCADIDECSLEEKA). The CXXC signature appears at 260 to 263 (CVGC). 4 disulfides stabilise this stretch: cysteine 260–cysteine 263, cysteine 291–cysteine 305, cysteine 298–cysteine 314, and cysteine 316–cysteine 327. Residues 287-328 (DIDECSLEEKACKRRNENCYNVPGSFVCVCPDGFEETEDACV) form the EGF-like 2; calcium-binding domain.

The protein belongs to the CRELD family. Interacts with Chrna4. Component of a complex containing at least Creld2, Manf, Matn3 and Pdia4. In terms of tissue distribution, broadly expressed in brain (at protein level).

Its subcellular location is the endoplasmic reticulum. It catalyses the reaction Catalyzes the rearrangement of -S-S- bonds in proteins.. In terms of biological role, protein disulfide isomerase. Might play a role in the unfolded protein response. May regulate transport of alpha4-beta2 neuronal acetylcholine receptor. This is Protein disulfide isomerase Creld2 (Creld2) from Rattus norvegicus (Rat).